A 69-amino-acid chain; its full sequence is Putative membrane protein insertion efficiency factor (69 aa).

Belongs to the UPF0161 family.

The protein resides in the cell membrane. Functionally, could be involved in insertion of integral membrane proteins into the membrane. The protein is Putative membrane protein insertion efficiency factor of Thermoanaerobacter pseudethanolicus (strain ATCC 33223 / 39E) (Clostridium thermohydrosulfuricum).